Consider the following 162-residue polypeptide: MILQTKHFGEIEINQEEIIRFPDGIPGFDDYTQYIFIENPDKEVPFHWLQAVEDGALAFVITNPFLFKPDYDFEISKNVVEKLSIEDQSDLQVYTIVRVPENIKEMTANLRAPLVINTKNKKGKQLMLDSEVYHTKHYILEEIQKMQEQSNQTSPAAEGGRD.

Belongs to the FliW family. In terms of assembly, interacts with translational regulator CsrA and flagellin(s).

It is found in the cytoplasm. In terms of biological role, acts as an anti-CsrA protein, binds CsrA and prevents it from repressing translation of its target genes, one of which is flagellin. Binds to flagellin and participates in the assembly of the flagellum. In Alkaliphilus metalliredigens (strain QYMF), this protein is Flagellar assembly factor FliW.